A 502-amino-acid polypeptide reads, in one-letter code: Glycogen synthase 1 (502 aa).

Lysine 18 is an ADP-alpha-D-glucose binding site.

This sequence belongs to the glycosyltransferase 1 family. Bacterial/plant glycogen synthase subfamily.

It carries out the reaction [(1-&gt;4)-alpha-D-glucosyl](n) + ADP-alpha-D-glucose = [(1-&gt;4)-alpha-D-glucosyl](n+1) + ADP + H(+). It participates in glycan biosynthesis; glycogen biosynthesis. Its function is as follows. Synthesizes alpha-1,4-glucan chains using ADP-glucose. The polypeptide is Glycogen synthase 1 (Geobacter metallireducens (strain ATCC 53774 / DSM 7210 / GS-15)).